Reading from the N-terminus, the 794-residue chain is uncharacterized protein (794 aa).

The N-terminal stretch at 1 to 22 (MKLKYGTIIFSGLLGVSAILAA) is a signal peptide. Cys-23 carries the N-palmitoyl cysteine lipid modification. Cys-23 carries S-diacylglycerol cysteine lipidation. Residues 177–196 (SSGKTQVSQTSSGSNQQKTL) show a composition bias toward polar residues. Disordered regions lie at residues 177–208 (SSGK…SDSS), 220–257 (AKNN…DKKI), and 466–506 (KSTD…ENNS). Positions 220–231 (AKNNGKKANNSK) are enriched in low complexity. The segment covering 238–250 (DQSTQTHNDQGDA) has biased composition (polar residues).

The protein belongs to the MG185/MG260 family.

The protein localises to the cell membrane. This is an uncharacterized protein from Mycoplasma pneumoniae (strain ATCC 29342 / M129 / Subtype 1) (Mycoplasmoides pneumoniae).